Consider the following 347-residue polypeptide: Protein RecA (347 aa).

65 to 72 is a binding site for ATP; sequence GPESSGKT. Positions 327–336 are enriched in basic and acidic residues; sequence KFEPTELSRE. The disordered stretch occupies residues 327–347; it reads KFEPTELSREEGDEDTLEDAM. Acidic residues predominate over residues 337 to 347; it reads EGDEDTLEDAM.

The protein belongs to the RecA family.

It is found in the cytoplasm. Its function is as follows. Can catalyze the hydrolysis of ATP in the presence of single-stranded DNA, the ATP-dependent uptake of single-stranded DNA by duplex DNA, and the ATP-dependent hybridization of homologous single-stranded DNAs. It interacts with LexA causing its activation and leading to its autocatalytic cleavage. The protein is Protein RecA of Xylella fastidiosa (strain M12).